The chain runs to 367 residues: 2-aminoethylphosphonate--pyruvate transaminase (367 aa).

Lysine 194 is subject to N6-(pyridoxal phosphate)lysine.

The protein belongs to the class-V pyridoxal-phosphate-dependent aminotransferase family. PhnW subfamily. As to quaternary structure, homodimer. Requires pyridoxal 5'-phosphate as cofactor.

It catalyses the reaction (2-aminoethyl)phosphonate + pyruvate = phosphonoacetaldehyde + L-alanine. Functionally, involved in phosphonate degradation. In Salmonella paratyphi A (strain ATCC 9150 / SARB42), this protein is 2-aminoethylphosphonate--pyruvate transaminase.